The following is a 497-amino-acid chain: Solute carrier family 2, facilitated glucose transporter member 6 (497 aa).

Residues 1–36 (MQEPLLRTEGLDYDTFPEVPATPGERERAGALKNRR) lie on the Cytoplasmic side of the membrane. Residues 5–6 (LL) carry the Dileucine internalization motif motif. The helical transmembrane segment at 37–57 (VFLATFAAVLGNFSFGYALVY) threads the bilayer. The Extracellular portion of the chain corresponds to 58–80 (TSPVIPELKLSSDPALHLDKIQA). A helical transmembrane segment spans residues 81–101 (SWFGSVFTLGAAAGGLSAMLL). Residues 102–115 (NDLLGRKLSIMFSA) are Cytoplasmic-facing. A helical membrane pass occupies residues 116–136 (VPSAIGYAIMAGARGLWMLLL). Residues 137–138 (GR) lie on the Extracellular side of the membrane. A helical transmembrane segment spans residues 139-159 (MLTGFAGGLTAACIPVYVSEI). Residues 160–171 (APPDVRGALGAT) lie on the Cytoplasmic side of the membrane. The chain crosses the membrane as a helical span at residues 172–192 (PQLMAVFGSLSLYALGLLLPW). Q173 is a binding site for a D-hexose. Position 193 (R193) is a topological domain, extracellular. The helical transmembrane segment at 194 to 214 (WLAVAGEGPVLIMILLLSFMP) threads the bilayer. Topologically, residues 215 to 273 (NSPRFLLSKSRDEEALQALTWLRADSEVHWEFEQIQDNVRRQSSRVSWAEAREPRVYRP) are cytoplasmic. Residues 274–294 (VLIAVLMRFLQQLTGITPILV) form a helical membrane-spanning segment. 284-285 (QQ) contacts a D-hexose. Residues 295–312 (YLQTIFDNTSVVLPSQQD) are Extracellular-facing. An N-linked (GlcNAc...) asparagine glycan is attached at N302. Residues 313 to 333 (AAIVGAVRLLSVLIAAVTMDL) traverse the membrane as a helical segment. Residues 334–337 (AGRK) lie on the Cytoplasmic side of the membrane. A helical transmembrane segment spans residues 338–358 (VLLYVSASVMFAANLTLGLYV). Residues 359-385 (QFVPRPLTPNSTVEIVTLGDTAFNYLT) lie on the Extracellular side of the membrane. N368 is a glycosylation site (N-linked (GlcNAc...) asparagine). A helical membrane pass occupies residues 386–406 (LIPLLATMLFIMGYAMGWGPI). The Cytoplasmic portion of the chain corresponds to 407–425 (TWLLMSEVLPLRARGVASG). W408 contributes to the a D-hexose binding site. The helical transmembrane segment at 426-446 (LCVLVSWLTAFVLTNYFLLAV) threads the bilayer. A topological domain (extracellular) is located at residue N447. A helical transmembrane segment spans residues 448 to 468 (AFGLQVPFFFFSAICLLSLLF). Residues 469–497 (TGCCVPETRGRSLEQIEAFFHTRRMSFRP) lie on the Cytoplasmic side of the membrane.

The protein belongs to the major facilitator superfamily. Sugar transporter (TC 2.A.1.1) family. As to expression, mainly expressed in brain and spleen. Also expressed in lung, heart, muscle, liver, kidney, fat, whole blood, testes, ovaries and uterus.

It is found in the lysosome membrane. Functionally, probable sugar transporter that acts as a regulator of glycolysis in macrophages. Does not transport glucose. The protein is Solute carrier family 2, facilitated glucose transporter member 6 of Mus musculus (Mouse).